Reading from the N-terminus, the 149-residue chain is Inner membrane protein YdcZ (149 aa).

Residues 1–4 lie on the Periplasmic side of the membrane; sequence MNQS. The helical transmembrane segment at 5 to 25 threads the bilayer; that stretch reads LTLAFLIAAGIGLVVQNTLMV. The Cytoplasmic segment spans residues 26–33; sequence RITQTSST. Residues 34 to 54 form a helical membrane-spanning segment; it reads ILIAMLLNSLVGIVLFVSILW. The Periplasmic portion of the chain corresponds to 55–70; sequence FKQGMAGFGELVSSVR. A helical membrane pass occupies residues 71 to 91; the sequence is WWTLIPGLLGSFFVFASISGY. Over 92–93 the chain is Cytoplasmic; it reads QN. The helical transmembrane segment at 94 to 114 threads the bilayer; that stretch reads VGAATTIAVLVASQLIGGLML. At 115 to 123 the chain is on the periplasmic side; it reads DIFRSHGVP. The chain crosses the membrane as a helical span at residues 124–144; it reads LRALFGPICGAILLVVGAWLV. Topologically, residues 145–149 are cytoplasmic; that stretch reads ARRSF.

The protein localises to the cell inner membrane. The sequence is that of Inner membrane protein YdcZ (ydcZ) from Escherichia coli (strain K12).